The following is a 30-amino-acid chain: Dermaseptin-DI4 (30 aa).

Expressed by the skin glands.

Its subcellular location is the secreted. Antibacterial activity against Gram-positive bacteria S.aureus and E.faecalis, and Gram-negative bacteria P.aeruginosa and E.coli. This Phyllomedusa distincta (Monkey frog) protein is Dermaseptin-DI4.